A 349-amino-acid polypeptide reads, in one-letter code: N-acetyltaurine hydrolase (349 aa).

The a divalent metal cation site is built by histidine 26, histidine 28, glutamate 169, histidine 201, histidine 230, and aspartate 298.

This sequence belongs to the metallo-dependent hydrolases superfamily. Phosphotriesterase family. A divalent metal cation is required as a cofactor.

It localises to the cytoplasm. The protein resides in the cytosol. It catalyses the reaction N-acetyltaurine + H2O = taurine + acetate. The catalysed reaction is N-propanoyltaurine + H2O = propanoate + taurine. The enzyme catalyses N-acetyl-L-methionine + H2O = L-methionine + acetate. It carries out the reaction N-acetyl-L-isoleucine + H2O = L-isoleucine + acetate. It catalyses the reaction N-acetyl-L-leucine + H2O = L-leucine + acetate. The catalysed reaction is N-acetyl-L-valine + H2O = L-valine + acetate. Its function is as follows. N-acetyltaurine hydrolase that regulates feeding by catalyzing the hydrolysis of N-acetyltaurine into taurine and acetate. N-acetyltaurine has anorexigenic and anti-obesity effects that are dependent on GFRAL receptor and GDF15. PTER also acts on other N-acetyl amino acids (Met, Ile, Leu, Val) and N-propionyltaurine, but at lower rates. This is N-acetyltaurine hydrolase from Pongo abelii (Sumatran orangutan).